Consider the following 503-residue polypeptide: ATP synthase subunit alpha, chloroplastic (503 aa).

170–177 (GDRQTGKT) lines the ATP pocket.

It belongs to the ATPase alpha/beta chains family. F-type ATPases have 2 components, CF(1) - the catalytic core - and CF(0) - the membrane proton channel. CF(1) has five subunits: alpha(3), beta(3), gamma(1), delta(1), epsilon(1). CF(0) has four main subunits: a, b, b' and c.

It is found in the plastid. Its subcellular location is the chloroplast thylakoid membrane. It catalyses the reaction ATP + H2O + 4 H(+)(in) = ADP + phosphate + 5 H(+)(out). In terms of biological role, produces ATP from ADP in the presence of a proton gradient across the membrane. The alpha chain is a regulatory subunit. In Thalassiosira pseudonana (Marine diatom), this protein is ATP synthase subunit alpha, chloroplastic.